The primary structure comprises 422 residues: MLDVKYIRNNPDEARKACVQKGEDDHVDEILKYDEQRRKILTDLEVLKNKRNTVSKEIGQLKKEGHDAQDKIAEMKEVSDKVKEMDDELKKVDEQLNYHLLCIPNIPNPDVPVGDDDEDNQVVKQVGEPVKKDYFKPHWEVAENLNLLDFKRAGKVTGTRFVNYVGDAARLERALIDFMIDVHVTEHGYVEMMPPFIANRDSMTGTGQLPKFEDDMYKLEDMEYFLIPTAEVTLTNLYRDEILPGDFLPRYLVAFTPCFRKEAGAHGRDTRGLIRQHQFNKVEMVKFVEPEKSYQELDSLVANAERVLQLLELPYQISLMCTGDLGFAAAKKYDLEVWLPSYDTYREISSCSNFEDFQARRANIRYRPEEGEKARFVHTLNGSGLAVGRTLAAILENYQNPDGTVTIPEVLKPYFNGRDVIS.

229–231 (TAE) lines the L-serine pocket. 260 to 262 (RKE) is an ATP binding site. Glutamate 283 provides a ligand contact to L-serine. 347–350 (EISS) is an ATP binding site. Serine 383 is an L-serine binding site.

The protein belongs to the class-II aminoacyl-tRNA synthetase family. Type-1 seryl-tRNA synthetase subfamily. As to quaternary structure, homodimer. The tRNA molecule binds across the dimer.

The protein resides in the cytoplasm. The enzyme catalyses tRNA(Ser) + L-serine + ATP = L-seryl-tRNA(Ser) + AMP + diphosphate + H(+). It catalyses the reaction tRNA(Sec) + L-serine + ATP = L-seryl-tRNA(Sec) + AMP + diphosphate + H(+). It functions in the pathway aminoacyl-tRNA biosynthesis; selenocysteinyl-tRNA(Sec) biosynthesis; L-seryl-tRNA(Sec) from L-serine and tRNA(Sec): step 1/1. Functionally, catalyzes the attachment of serine to tRNA(Ser). Is also able to aminoacylate tRNA(Sec) with serine, to form the misacylated tRNA L-seryl-tRNA(Sec), which will be further converted into selenocysteinyl-tRNA(Sec). In Natranaerobius thermophilus (strain ATCC BAA-1301 / DSM 18059 / JW/NM-WN-LF), this protein is Serine--tRNA ligase.